The chain runs to 450 residues: Keratin, type I cytoskeletal 25 (450 aa).

Positions methionine 1–leucine 23 are enriched in low complexity. The tract at residues methionine 1–glycine 26 is disordered. The interval methionine 1–asparagine 78 is head. The tract at residues glutamate 79–tryptophan 114 is coil 1A. The region spanning glutamate 79–cysteine 394 is the IF rod domain. The tract at residues tyrosine 115–isoleucine 136 is linker 1. Residues isoleucine 137 to leucine 228 form a coil 1B region. Residues glutamine 229–leucine 251 are linker 12. Positions leucine 252–aspartate 390 are coil 2. The tract at residues aspartate 391–asparagine 450 is tail. Serine 442 bears the Phosphoserine mark.

Belongs to the intermediate filament family. As to quaternary structure, heterodimer of a type I and a type II keratin. Heterodimer with type II keratin KRT5 leading to the formation of keratin intermediate filament (KIF) network. Interacts with KRT6A to form filaments.

The protein resides in the cytoplasm. Functionally, essential for the proper assembly of type I and type II keratin protein complexes and formation of keratin intermediate filaments in the inner root sheath (irs). Plays a role in the cytoskeleton organization. The polypeptide is Keratin, type I cytoskeletal 25 (KRT25) (Pan troglodytes (Chimpanzee)).